The primary structure comprises 319 residues: uncharacterized protein (319 aa).

The 143-residue stretch at 36-178 (IIEFLLSFKG…MTVIHEERGF (143 aa)) folds into the SIS domain. Residue 51-56 (GIGKSG) coordinates ATP. CBS domains are found at residues 203–263 (MRSG…HLKT) and 268–319 (MTKN…MGVS).

The protein belongs to the SIS family. GutQ/KpsF subfamily.

This is an uncharacterized protein from Rickettsia prowazekii (strain Madrid E).